A 137-amino-acid chain; its full sequence is Nucleoside diphosphate kinase (137 aa).

K10, F58, R86, T92, R103, and N113 together coordinate ATP. H116 (pros-phosphohistidine intermediate) is an active-site residue.

The protein belongs to the NDK family. In terms of assembly, homotetramer. It depends on Mg(2+) as a cofactor.

It is found in the cytoplasm. It catalyses the reaction a 2'-deoxyribonucleoside 5'-diphosphate + ATP = a 2'-deoxyribonucleoside 5'-triphosphate + ADP. It carries out the reaction a ribonucleoside 5'-diphosphate + ATP = a ribonucleoside 5'-triphosphate + ADP. In terms of biological role, major role in the synthesis of nucleoside triphosphates other than ATP. The ATP gamma phosphate is transferred to the NDP beta phosphate via a ping-pong mechanism, using a phosphorylated active-site intermediate. This chain is Nucleoside diphosphate kinase, found in Helicobacter acinonychis (strain Sheeba).